The chain runs to 572 residues: MFKHTLGAAALSLLFNSNAVQASPVPETSPATGHLFKRVAQISPQYPMFTVPLPIPPVKQPRLTVTNPVNGQEIWYYEVEIKPFTHQVYPDLGSADLVGYDGMSPGPTFQVPRGVETVVRFINNAEAPNSVHLHGSFSRAAFDGWAEDITEPGSFKDYYYPNRQSARTLWYHDHAMHITAENAYRGQAGLYMLTDPAEDALNLPSGYGEFDIPMILTSKQYTANGNLVTTNGELNSFWGDVIHVNGQPWPFKNVEPRKYRFRFLDAAVSRSFGLYFADTDAIDTRLPFKVIASDSGLLEHPADTSLLYISMAERYEVVFDFSDYAGKTIELRNLGGSIGGIGTDTDYDNTDKVMRFVVADDTTQPDTSVVPANLRDVPFPSPTTNTPRQFRFGRTGPTWTINGVAFADVQNRLLANVPVGTVERWELINAGNGWTHPIHIHLVDFKVISRTSGNNARTVMPYESGLKDVVWLGRRETVVVEAHYAPFPGVYMFHCHNLIHEDHDMMAAFNATVLPDYGYNATVFVDPMEELWQARPYELGEFQAQSGQFSVQAVTERIQTMAEYRPYAAADE.

Positions 1 to 19 (MFKHTLGAAALSLLFNSNA) are cleaved as a signal peptide. Residues 20 to 38 (VQASPVPETSPATGHLFKR) constitute a propeptide that is removed on maturation. Plastocyanin-like domains are found at residues 98–194 (VGYD…YMLT) and 404–526 (VAFA…VFVD). Residues H132, H134, H172, H174, H436, H439, H441, H494, C495, H496, H500, and M505 each coordinate Cu cation. N-linked (GlcNAc...) asparagine glycans are attached at residues N510 and N520.

The protein belongs to the multicopper oxidase family. The cofactor is Cu cation.

It carries out the reaction 2 (4Z,15Z)-bilirubin IXalpha + O2 = 2 biliverdin IXalpha + 2 H2O. In terms of biological role, oxidation of bilirubin and other tetrapyrroles. The chain is Bilirubin oxidase from Albifimbria verrucaria (Myrothecium leaf spot and pod blight fungus).